The chain runs to 301 residues: GTPase Era (301 aa).

The 169-residue stretch at 7–175 (YCGFIAIVGR…AAIVRKHLPE (169 aa)) folds into the Era-type G domain. The G1 stretch occupies residues 15 to 22 (GRPNVGKS). Position 15 to 22 (15 to 22 (GRPNVGKS)) interacts with GTP. The tract at residues 41-45 (QTTRH) is G2. The G3 stretch occupies residues 62–65 (DTPG). GTP contacts are provided by residues 62-66 (DTPGL) and 124-127 (NKVD). The G4 stretch occupies residues 124-127 (NKVD). The segment at 154–156 (ISA) is G5. The 78-residue stretch at 206-283 (LGAELPYSVT…HLELWVKVKS (78 aa)) folds into the KH type-2 domain.

It belongs to the TRAFAC class TrmE-Era-EngA-EngB-Septin-like GTPase superfamily. Era GTPase family. In terms of assembly, monomer.

The protein resides in the cytoplasm. It localises to the cell inner membrane. In terms of biological role, an essential GTPase that binds both GDP and GTP, with rapid nucleotide exchange. Plays a role in 16S rRNA processing and 30S ribosomal subunit biogenesis and possibly also in cell cycle regulation and energy metabolism. The protein is GTPase Era of Shigella flexneri serotype 5b (strain 8401).